The primary structure comprises 287 residues: Lycopene elongase/hydratase (287 aa).

A run of 7 helical transmembrane segments spans residues 15 to 35 (ISWV…AGEI), 37 to 57 (WLFW…MYGI), 97 to 117 (IPFL…WLTI), 137 to 157 (FIDA…GATI), 166 to 186 (MWIA…LGAV), 218 to 238 (LLAA…GIAI), and 265 to 285 (VFLW…IAIH).

The protein belongs to the UbiA prenyltransferase family.

Its subcellular location is the cell membrane. The catalysed reaction is all-trans-lycopene + dimethylallyl diphosphate + A + H2O = nonaflavuxanthin + AH2 + diphosphate. It carries out the reaction nonaflavuxanthin + dimethylallyl diphosphate + A + H2O = flavuxanthin + AH2 + diphosphate. It participates in carotenoid biosynthesis. Catalyzes the elongation of the C(40) carotenoid all-trans-lycopene to the acyclic C(50) carotenoid flavuxanthin during decaprenoxanthin biosynthesis. Acts as a bifunctional enzyme that catalyzes the elongation of lycopene by attaching a C(5) isoprene unit at C-2, as well as the hydroxylation of the new isoprene unit. The enzyme acts at both ends of the substrate, forming the C(50) carotenoid flavuxanthin via the C(45) intermediate nonaflavuxanthin. This chain is Lycopene elongase/hydratase, found in Corynebacterium glutamicum (Brevibacterium saccharolyticum).